We begin with the raw amino-acid sequence, 267 residues long: D-aminoacyl-tRNA deacylase (267 aa).

The protein belongs to the DtdA deacylase family. In terms of assembly, monomer. It depends on Zn(2+) as a cofactor.

It carries out the reaction a D-aminoacyl-tRNA + H2O = a tRNA + a D-alpha-amino acid + H(+). It catalyses the reaction glycyl-tRNA(Ala) + H2O = tRNA(Ala) + glycine + H(+). Its function is as follows. D-aminoacyl-tRNA deacylase with broad substrate specificity. By recycling D-aminoacyl-tRNA to D-amino acids and free tRNA molecules, this enzyme counteracts the toxicity associated with the formation of D-aminoacyl-tRNA entities in vivo. This chain is D-aminoacyl-tRNA deacylase, found in Methanothrix thermoacetophila (strain DSM 6194 / JCM 14653 / NBRC 101360 / PT) (Methanosaeta thermophila).